Consider the following 255-residue polypeptide: MNGWVARGLARRAAALGLGLRVLLCFGLCLEIAPTPIQTWSPTQAPGPSAGSCPPTNFQCRSDGRCLPLIWRCDVDQDCPDGSDEEECGTEVPNGSPSPCDIMDDCPDHNKNLLNCGPQSCPEGELCCPLDGVCIPSTWLCDGHRDCSDYSDELGCGTKTHEEGRTMSTGTPVTLENVTYLSNATVTAIEDWDSVQSGNRNVYGIIAAVAVLSISLAAGILFALSRLCAQGCLAPLGLLVSMKGSLQPEKKTSVL.

An N-terminal signal peptide occupies residues 1-29 (MNGWVARGLARRAAALGLGLRVLLCFGLC). At 30–203 (LEIAPTPIQT…SVQSGNRNVY (174 aa)) the chain is on the extracellular side. LDL-receptor class A domains follow at residues 52–89 (SCPP…EECG) and 120–157 (SCPE…LGCG). 6 disulfide bridges follow: Cys-53/Cys-66, Cys-60/Cys-79, Cys-73/Cys-88, Cys-121/Cys-134, Cys-128/Cys-147, and Cys-141/Cys-156. Trp-71, Asp-74, Asp-76, Asp-78, Asp-84, and Glu-85 together coordinate Ca(2+). Positions 139, 142, 144, 146, 152, and 153 each coordinate Ca(2+). 2 N-linked (GlcNAc...) asparagine glycosylation sites follow: Asn-177 and Asn-183. The chain crosses the membrane as a helical span at residues 204–224 (GIIAAVAVLSISLAAGILFAL). Residues 225–255 (SRLCAQGCLAPLGLLVSMKGSLQPEKKTSVL) are Cytoplasmic-facing.

Interacts (via LDL-receptor class A domains) with TCN2.

It localises to the cell membrane. Functionally, receptor for transcobalamin saturated with cobalamin (TCbl). Plays an important role in cobalamin uptake. Plasma membrane protein that is expressed on follicular dendritic cells (FDC) and mediates interaction with germinal center B cells. Functions as a costimulator to promote B cell responses to antigenic stimuli; promotes B cell differentiation and proliferation. Germinal center-B (GC-B) cells differentiate into memory B-cells and plasma cells (PC) through interaction with T-cells and follicular dendritic cells (FDC). CD320 augments the proliferation of PC precursors generated by IL-10. The chain is CD320 antigen (CD320) from Bos taurus (Bovine).